Reading from the N-terminus, the 93-residue chain is Small ribosomal subunit protein uS19c (93 aa).

This sequence belongs to the universal ribosomal protein uS19 family.

The protein localises to the plastid. Its subcellular location is the chloroplast. Functionally, protein S19 forms a complex with S13 that binds strongly to the 16S ribosomal RNA. This is Small ribosomal subunit protein uS19c from Stigeoclonium helveticum (Green alga).